The chain runs to 368 residues: DNA replication and repair protein RecF (368 aa).

30–37 is an ATP binding site; the sequence is GNNAQGKT.

This sequence belongs to the RecF family.

It localises to the cytoplasm. Its function is as follows. The RecF protein is involved in DNA metabolism; it is required for DNA replication and normal SOS inducibility. RecF binds preferentially to single-stranded, linear DNA. It also seems to bind ATP. In Streptococcus pyogenes serotype M12 (strain MGAS2096), this protein is DNA replication and repair protein RecF.